Reading from the N-terminus, the 355-residue chain is UDP-3-O-acylglucosamine N-acyltransferase (355 aa).

Residue His-252 is the Proton acceptor of the active site.

This sequence belongs to the transferase hexapeptide repeat family. LpxD subfamily. Homotrimer.

The catalysed reaction is a UDP-3-O-[(3R)-3-hydroxyacyl]-alpha-D-glucosamine + a (3R)-hydroxyacyl-[ACP] = a UDP-2-N,3-O-bis[(3R)-3-hydroxyacyl]-alpha-D-glucosamine + holo-[ACP] + H(+). The protein operates within bacterial outer membrane biogenesis; LPS lipid A biosynthesis. Its function is as follows. Catalyzes the N-acylation of UDP-3-O-acylglucosamine using 3-hydroxyacyl-ACP as the acyl donor. Is involved in the biosynthesis of lipid A, a phosphorylated glycolipid that anchors the lipopolysaccharide to the outer membrane of the cell. The chain is UDP-3-O-acylglucosamine N-acyltransferase from Polynucleobacter necessarius subsp. necessarius (strain STIR1).